We begin with the raw amino-acid sequence, 332 residues long: Twinfilin-1 (332 aa).

Positions 5–132 (SGIVAEQALL…VDLKNFDSAR (128 aa)) constitute an ADF-H 1 domain. Residues S167 and S172 each carry the phosphoserine modification. The ADF-H 2 domain maps to 173–300 (PLSLTFRVNS…DKSLLMATNK (128 aa)). Positions 301-332 (EDSLDHGSNPDLPNKSNLKFNKPKGPLRKRRT) are disordered. Residues 321-332 (NKPKGPLRKRRT) show a composition bias toward basic residues.

The protein belongs to the actin-binding proteins ADF family. Twinfilin subfamily. Interacts with G-actin; ADP-actin form.

The protein resides in the cytoplasm. It is found in the cytoskeleton. Its function is as follows. Actin-binding protein involved in motile and morphological processes. Inhibits actin polymerization, likely by sequestering G-actin. Prevents actin filament assembly by forming a 1:1 complex with actin monomers, and inhibits the nucleotide exchange reaction of actin monomers. This is Twinfilin-1 (TWF1) from Saccharomyces cerevisiae (strain ATCC 204508 / S288c) (Baker's yeast).